Reading from the N-terminus, the 433-residue chain is Tol-Pal system protein TolB (433 aa).

A signal peptide spans 1-21; sequence MINLFRGLLVVLCFASAMVSA.

This sequence belongs to the TolB family. As to quaternary structure, the Tol-Pal system is composed of five core proteins: the inner membrane proteins TolA, TolQ and TolR, the periplasmic protein TolB and the outer membrane protein Pal. They form a network linking the inner and outer membranes and the peptidoglycan layer.

It is found in the periplasm. Part of the Tol-Pal system, which plays a role in outer membrane invagination during cell division and is important for maintaining outer membrane integrity. This chain is Tol-Pal system protein TolB, found in Pseudomonas syringae pv. syringae (strain B728a).